The following is a 1161-amino-acid chain: DNA-directed RNA polymerase 132 kDa polypeptide (1161 aa).

It belongs to the RNA polymerase beta chain family. The DNA-dependent RNA polymerase used for intermediate and late genes expression consists of eight subunits (147) kDa, (133) kDa, (35) kDa, (30) kDa, (22) kDa, (19) kDa, (18) kDa and (7) kDa totalling more than 500 kDa in mass. The same holoenzyme, with the addition of the transcription-specificity factor RAP94, is used for early gene expression.

The protein resides in the virion. It carries out the reaction RNA(n) + a ribonucleoside 5'-triphosphate = RNA(n+1) + diphosphate. Its function is as follows. Part of the DNA-dependent RNA polymerase which catalyzes the transcription of viral DNA into RNA using the four ribonucleoside triphosphates as substrates. Responsible for the transcription of early, intermediate and late genes. DNA-dependent RNA polymerase associates with the early transcription factor (ETF), itself composed of D6 and A7, thereby allowing the early genes transcription. Late transcription, and probably also intermediate transcription, require newly synthesized RNA polymerase. The polypeptide is DNA-directed RNA polymerase 132 kDa polypeptide (RPO132) (Fowlpox virus (strain NVSL) (FPV)).